We begin with the raw amino-acid sequence, 330 residues long: Flotillin-like protein FloA (330 aa).

A run of 2 helical transmembrane segments spans residues 5 to 25 (IILPIIIIAAVLIALAILFTF) and 28 to 48 (VALWISALAAGVKISIFTLIG).

Belongs to the flotillin-like FloA family. As to quaternary structure, homooligomerizes.

It is found in the cell membrane. The protein localises to the membrane raft. Found in functional membrane microdomains (FMM) that may be equivalent to eukaryotic membrane rafts. FMMs are highly dynamic and increase in number as cells age. Flotillins are thought to be important factors in membrane fluidity. In Oceanobacillus iheyensis (strain DSM 14371 / CIP 107618 / JCM 11309 / KCTC 3954 / HTE831), this protein is Flotillin-like protein FloA.